Reading from the N-terminus, the 652-residue chain is RNA-binding E3 ubiquitin-protein ligase MEX3C (652 aa).

2 disordered regions span residues 15–39 (AAPA…ELEG) and 80–136 (QARR…EDRP). A compositionally biased stretch (pro residues) spans 18-33 (APLPQPPPLPPPPPAG). Residues 101–134 (AELELEVDEEEGEEAELDGELLEEEELEEAEEED) show a composition bias toward acidic residues. KH domains follow at residues 225 to 286 (TTEC…KREI) and 319 to 380 (QTTV…REEI). Disordered regions lie at residues 429 to 448 (ARMM…SGST) and 506 to 566 (FEPV…HVGL). The span at 430 to 448 (RMMSNYRNDSSSSLGSGST) shows a compositional bias: low complexity. Positions 519 to 537 (PSGNMKTQRRGSQPSTPRL) are enriched in polar residues. 2 positions are modified to phosphoserine: Ser530 and Ser538. The span at 544–555 (SIEHPLARRVRS) shows a compositional bias: basic and acidic residues. An RING-type zinc finger spans residues 601 to 641 (CVICFENEVIAALVPCGHNLFCMECANKICEKRTPSCPVCQ).

Interacts with USP7, which antagonizes the ability to degrade mRNA. Phosphorylated.

It localises to the nucleus. The protein resides in the cytoplasm. It catalyses the reaction S-ubiquitinyl-[E2 ubiquitin-conjugating enzyme]-L-cysteine + [acceptor protein]-L-lysine = [E2 ubiquitin-conjugating enzyme]-L-cysteine + N(6)-ubiquitinyl-[acceptor protein]-L-lysine.. RNA-binding protein. May be involved in post-transcriptional regulatory mechanisms, modulating levels of some mRNAs by promoting their degradation in a way involving ubiquitin ligase activity. May act as suppressor of replication stress and chromosome missegregation. The sequence is that of RNA-binding E3 ubiquitin-protein ligase MEX3C (Mex3c) from Mus musculus (Mouse).